The sequence spans 405 residues: Solute carrier family 35 member E2A (405 aa).

Positions Met1–Lys22 are disordered. 10 helical membrane-spanning segments follow: residues Leu76 to Ile96, Met106 to Pro126, Phe142 to Val162, Val167 to Ser187, Thr195 to Ala215, Ser219 to Phe241, Ala264 to Gly284, Ile296 to Ala316, Phe326 to Gly346, and Asn347 to Tyr367. The disordered stretch occupies residues Ser380 to His405.

It belongs to the TPT transporter family. SLC35E subfamily.

It is found in the membrane. Its function is as follows. Putative transporter. This chain is Solute carrier family 35 member E2A (Slc35e2a), found in Mus musculus (Mouse).